The chain runs to 163 residues: Nucleotide-binding protein all4662 (163 aa).

It belongs to the YajQ family.

Functionally, nucleotide-binding protein. The polypeptide is Nucleotide-binding protein all4662 (Nostoc sp. (strain PCC 7120 / SAG 25.82 / UTEX 2576)).